The sequence spans 1157 residues: Folliculin-interacting protein 1 (1157 aa).

The 431-residue stretch at 37–467 folds into the uDENN FNIP1/2-type domain; the sequence is FDPSQIRLIV…TVMPNGQPPI (431 aa). Disordered stretches follow at residues 92 to 120, 616 to 665, 769 to 796, and 904 to 955; these read PGGD…CPKY, SQQE…TKVE, SPPT…NRDC, and VPHG…NYYG. Over residues 95–111 the composition is skewed to low complexity; the sequence is DSSSSLDSSINSSSSFS. One can recognise a cDENN FNIP1/2-type domain in the interval 475–1083; it reads SSQSVDMLAK…VSNLLHSTLQ (609 aa). The span at 651–664 shows a compositional bias: basic and acidic residues; the sequence is ADGHQPRTCQDTKV. Residues 904–916 show a composition bias toward basic and acidic residues; that stretch reads VPHGDRENAEKKV. The dDENN FNIP1/2-type domain occupies 1093–1148; it reads FCVMHLEDRLQELYFKSKMLSEYLKGQMRVHVKELGVVLGIESSDLPLLAAVASTH.

The protein belongs to the FNIP family. In terms of assembly, homodimer and homomultimer. Heterodimer and heteromultimer with FNIP2. Component of the lysosomal folliculin complex (LFC).

Its subcellular location is the lysosome membrane. It localises to the cytoplasm. It is found in the cytosol. In terms of biological role, binding partner of the GTPase-activating protein FLCN: involved in the cellular response to amino acid availability by regulating the non-canonical mTORC1 signaling cascade controlling the MiT/TFE factors TFEB and TFE3. Required to promote FLCN recruitment to lysosomes and interaction with Rag GTPases, leading to activation of the non-canonical mTORC1 signaling. In low-amino acid conditions, component of the lysosomal folliculin complex (LFC) on the membrane of lysosomes, which inhibits the GTPase-activating activity of FLCN, thereby inactivating mTORC1 and promoting nuclear translocation of TFEB and TFE3. Upon amino acid restimulation, disassembly of the LFC complex liberates the GTPase-activating activity of FLCN, leading to activation of mTORC1 and subsequent inactivation of TFEB and TFE3. In addition to its role in mTORC1 signaling, also acts as a co-chaperone of HSP90AA1/Hsp90: inhibits the ATPase activity of HSP90AA1/Hsp90, leading to activate both kinase and non-kinase client proteins of HSP90AA1/Hsp90. Acts as a scaffold to load client protein FLCN onto HSP90AA1/Hsp90. This Gallus gallus (Chicken) protein is Folliculin-interacting protein 1.